Reading from the N-terminus, the 149-residue chain is D-aminoacyl-tRNA deacylase (149 aa).

Positions 137–138 (GP) match the Gly-cisPro motif, important for rejection of L-amino acids motif.

It belongs to the DTD family. Homodimer.

The protein localises to the cytoplasm. The catalysed reaction is glycyl-tRNA(Ala) + H2O = tRNA(Ala) + glycine + H(+). The enzyme catalyses a D-aminoacyl-tRNA + H2O = a tRNA + a D-alpha-amino acid + H(+). Its function is as follows. An aminoacyl-tRNA editing enzyme that deacylates mischarged D-aminoacyl-tRNAs. Also deacylates mischarged glycyl-tRNA(Ala), protecting cells against glycine mischarging by AlaRS. Acts via tRNA-based rather than protein-based catalysis; rejects L-amino acids rather than detecting D-amino acids in the active site. By recycling D-aminoacyl-tRNA to D-amino acids and free tRNA molecules, this enzyme counteracts the toxicity associated with the formation of D-aminoacyl-tRNA entities in vivo and helps enforce protein L-homochirality. The protein is D-aminoacyl-tRNA deacylase of Paracoccus denitrificans (strain Pd 1222).